We begin with the raw amino-acid sequence, 101 residues long: Large ribosomal subunit protein bL21 (101 aa).

It belongs to the bacterial ribosomal protein bL21 family. In terms of assembly, part of the 50S ribosomal subunit. Contacts protein L20.

In terms of biological role, this protein binds to 23S rRNA in the presence of protein L20. This Corynebacterium diphtheriae (strain ATCC 700971 / NCTC 13129 / Biotype gravis) protein is Large ribosomal subunit protein bL21.